Here is a 603-residue protein sequence, read N- to C-terminus: ATP-dependent lipid A-core flippase (603 aa).

A run of 4 helical transmembrane segments spans residues 20–40 (LGYV…FLIF), 79–99 (LVYA…LGSF), 170–190 (VFLF…MLAI), and 269–289 (PMLQ…VLWL). Residues 31-324 (LLSIVGFLIF…LSEVSSTVQR (294 aa)) form the ABC transmembrane type-1 domain. The ABC transporter domain occupies 356 to 592 (LEVRNLSFRY…NGHYARLHAM (237 aa)). 390–397 (GRSGSGKS) lines the ATP pocket.

Belongs to the ABC transporter superfamily. Lipid exporter (TC 3.A.1.106) family. Homodimer.

The protein resides in the cell inner membrane. It catalyses the reaction ATP + H2O + lipid A-core oligosaccharideSide 1 = ADP + phosphate + lipid A-core oligosaccharideSide 2.. Its function is as follows. Involved in lipopolysaccharide (LPS) biosynthesis. Translocates lipid A-core from the inner to the outer leaflet of the inner membrane. Transmembrane domains (TMD) form a pore in the inner membrane and the ATP-binding domain (NBD) is responsible for energy generation. The protein is ATP-dependent lipid A-core flippase of Pseudomonas aeruginosa (strain ATCC 15692 / DSM 22644 / CIP 104116 / JCM 14847 / LMG 12228 / 1C / PRS 101 / PAO1).